The sequence spans 160 residues: Large ribosomal subunit protein uL11 (160 aa).

Belongs to the universal ribosomal protein uL11 family. In terms of assembly, part of the ribosomal stalk of the 50S ribosomal subunit. Interacts with L10 and the large rRNA to form the base of the stalk. L10 forms an elongated spine to which L12 dimers bind in a sequential fashion forming a multimeric L10(L12)X complex.

Functionally, forms part of the ribosomal stalk which helps the ribosome interact with GTP-bound translation factors. This is Large ribosomal subunit protein uL11 from Methanococcus aeolicus (strain ATCC BAA-1280 / DSM 17508 / OCM 812 / Nankai-3).